The primary structure comprises 399 residues: Phosphoglycerate kinase (399 aa).

Residues 21 to 23 (DFN), Arg36, 59 to 62 (HLGR), Arg120, and Arg158 contribute to the substrate site. Residues Lys209, Gly297, Glu328, and 355–358 (GGDS) contribute to the ATP site.

It belongs to the phosphoglycerate kinase family. As to quaternary structure, monomer.

It localises to the cytoplasm. The catalysed reaction is (2R)-3-phosphoglycerate + ATP = (2R)-3-phospho-glyceroyl phosphate + ADP. Its pathway is carbohydrate degradation; glycolysis; pyruvate from D-glyceraldehyde 3-phosphate: step 2/5. This chain is Phosphoglycerate kinase, found in Streptococcus thermophilus (strain ATCC BAA-491 / LMD-9).